Consider the following 426-residue polypeptide: Phosphoribosylamine--glycine ligase (426 aa).

The ATP-grasp domain maps to 113 to 320 (KSLMTEAKIP…LLELLYRAST (208 aa)). 139-200 (LESKSIPIVI…EEFMEGQEAS (62 aa)) contributes to the ATP binding site. Residues Glu-290 and Asn-292 each contribute to the Mg(2+) site.

This sequence belongs to the GARS family. It depends on Mg(2+) as a cofactor. Requires Mn(2+) as cofactor.

It catalyses the reaction 5-phospho-beta-D-ribosylamine + glycine + ATP = N(1)-(5-phospho-beta-D-ribosyl)glycinamide + ADP + phosphate + H(+). Its pathway is purine metabolism; IMP biosynthesis via de novo pathway; N(1)-(5-phospho-D-ribosyl)glycinamide from 5-phospho-alpha-D-ribose 1-diphosphate: step 2/2. This is Phosphoribosylamine--glycine ligase from Leptospira interrogans serogroup Icterohaemorrhagiae serovar Lai (strain 56601).